The sequence spans 460 residues: Glycogen synthase (460 aa).

Lysine 15 lines the ADP-alpha-D-glucose pocket.

The protein belongs to the glycosyltransferase 1 family. Bacterial/plant glycogen synthase subfamily.

It carries out the reaction [(1-&gt;4)-alpha-D-glucosyl](n) + ADP-alpha-D-glucose = [(1-&gt;4)-alpha-D-glucosyl](n+1) + ADP + H(+). It participates in glycan biosynthesis; glycogen biosynthesis. Functionally, synthesizes alpha-1,4-glucan chains using ADP-glucose. This chain is Glycogen synthase, found in Trichodesmium erythraeum (strain IMS101).